We begin with the raw amino-acid sequence, 341 residues long: S-adenosylmethionine:tRNA ribosyltransferase-isomerase (341 aa).

The protein belongs to the QueA family. As to quaternary structure, monomer.

It is found in the cytoplasm. It carries out the reaction 7-aminomethyl-7-carbaguanosine(34) in tRNA + S-adenosyl-L-methionine = epoxyqueuosine(34) in tRNA + adenine + L-methionine + 2 H(+). It functions in the pathway tRNA modification; tRNA-queuosine biosynthesis. In terms of biological role, transfers and isomerizes the ribose moiety from AdoMet to the 7-aminomethyl group of 7-deazaguanine (preQ1-tRNA) to give epoxyqueuosine (oQ-tRNA). In Clostridium tetani (strain Massachusetts / E88), this protein is S-adenosylmethionine:tRNA ribosyltransferase-isomerase.